A 318-amino-acid polypeptide reads, in one-letter code: MDKKKGILLVALGTPRSCETEDVREYLKEFLGDPLVIQKPRWLWLPILNGIILKVRPQKSAEMYKQIWTDEGSPLMSYTIAQTEQLQGLREDFDVRFAMTYGEPRIDKVIREMKESGVEDITVLPLYPQYSLTTVEPIIQQVKKIDDKINVIRDFHQIESYTDLLAESIREKWQANHYDKLILSYHGIPLSYVTKKKDAYEAQCIETTRLVVEKLGLKEEEYEHTYQSKFGPEKWLEPATIDRIAELPKEDTKKVLICSPAFVADCLETLFELEIENKEVFVENGGETFDFVHPFNDSLEFTKVLSEVIEKNKVEVEV.

Positions 186 and 268 each coordinate Fe(2+).

This sequence belongs to the ferrochelatase family.

It localises to the cytoplasm. The enzyme catalyses Fe-coproporphyrin III + 2 H(+) = coproporphyrin III + Fe(2+). It functions in the pathway porphyrin-containing compound metabolism; protoheme biosynthesis. Involved in coproporphyrin-dependent heme b biosynthesis. Catalyzes the insertion of ferrous iron into coproporphyrin III to form Fe-coproporphyrin III. The sequence is that of Coproporphyrin III ferrochelatase from Lactococcus lactis subsp. cremoris (strain SK11).